A 639-amino-acid polypeptide reads, in one-letter code: MTLEITGSELIKSKLIDAPERSGVYRMFDVNKQVLYVGKAKNLKKRLTNYIKSNLDNKTLRMIANTCFLEYSITNSEVEALLLEAQLIKKFQPKFNILLKDCKSFPFIKLRLDHDFPQLLKYRGKTLSDGKFFGPFASSVEVNTTLTELQKIFKLRSCTDNYFNSRTRPCLQYEIKRCYAPCVGKINKEDYRDLVTQVKDFLQGRTKELQENLSRKMEELSSQMRFEEAAEIRDRIKALSYVQLKAGVSDVVKDADIIAIVEKNGHYCVEVFLYRAGQACGNIPYFPTATENSTKEEVLEYFLLQFYQKQHVPAAIIINHEINDKENVIEAIKKINNILQINITVPNKGGKAKLVQNAETHALFSLEQYLKKFAKNQEIMFEIKELFGLSEIPERIEIYDNSHIQGKFAVGVMVVAGKVGFDKKEYRVFNVHTPSLVCHSRESGDPKRLMDSCFRGNGIKNCGGDIKGDDYEMLRQVLTRRLTRLRQEPHKLPSLMIIDGGKGHLGVVKEVMDKFEMNIPFVCMSKGVDRNAGFEQFHVIGKEVFTLDKNLPVMKYLQILRDEAHNFAIKNHRLGRSRAIKISRLDDIEGVGETRKKALLHYFGSYKAVCDATIYELAKVNGINKLLAEMIFNVLHRKN.

Positions 20-97 (ERSGVYRMFD…IKKFQPKFNI (78 aa)) constitute a GIY-YIG domain. Residues 207 to 242 (KELQENLSRKMEELSSQMRFEEAAEIRDRIKALSYV) form the UVR domain.

It belongs to the UvrC family. Interacts with UvrB in an incision complex.

It is found in the cytoplasm. Functionally, the UvrABC repair system catalyzes the recognition and processing of DNA lesions. UvrC both incises the 5' and 3' sides of the lesion. The N-terminal half is responsible for the 3' incision and the C-terminal half is responsible for the 5' incision. The chain is UvrABC system protein C from Rickettsia conorii (strain ATCC VR-613 / Malish 7).